A 523-amino-acid chain; its full sequence is WD repeat-containing protein YPL247C (523 aa).

The tract at residues 1–64 (MDPFHNGNKR…TTNGGNSKRN (64 aa)) is disordered. Over residues 9–40 (KRSSISFGSSQRQPYNKNNYLSGTNGPSSAAQ) the composition is skewed to polar residues. At Ser-47 the chain carries Phosphoserine. Residues 52 to 64 (SGNTTNGGNSKRN) show a composition bias toward low complexity. Ser-65 is subject to Phosphoserine. 4 WD repeats span residues 173–213 (DVVY…RQFQ), 241–281 (GTFP…YVKT), 285–325 (AHDS…HSTI), and 392–432 (GHGS…MEIN). The tract at residues 436 to 472 (SKSPSIHGTSLEDPDGDTEMTDGGAGSGLNEDPLSLN) is disordered.

Belongs to the WD repeat WDR68 family.

It localises to the cytoplasm. The protein localises to the nucleus. The sequence is that of WD repeat-containing protein YPL247C from Saccharomyces cerevisiae (strain ATCC 204508 / S288c) (Baker's yeast).